The chain runs to 394 residues: Putative agmatinase 1 (394 aa).

An N-terminal signal peptide occupies residues Met1 to Ala20. Mn(2+)-binding residues include His186, Asp209, His211, Asp213, Asp307, and Asp309.

This sequence belongs to the arginase family. Mn(2+) serves as cofactor.

The catalysed reaction is agmatine + H2O = urea + putrescine. The sequence is that of Putative agmatinase 1 from Schizosaccharomyces pombe (strain 972 / ATCC 24843) (Fission yeast).